Consider the following 187-residue polypeptide: Threonylcarbamoyl-AMP synthase (187 aa).

Residues 4-187 (NHTDDPFLLD…GHSGQTIRDN (184 aa)) form the YrdC-like domain. Positions 168 to 187 (GSRSPSKIRHGHSGQTIRDN) are disordered.

The protein belongs to the SUA5 family. TsaC subfamily.

It localises to the cytoplasm. It catalyses the reaction L-threonine + hydrogencarbonate + ATP = L-threonylcarbamoyladenylate + diphosphate + H2O. In terms of biological role, required for the formation of a threonylcarbamoyl group on adenosine at position 37 (t(6)A37) in tRNAs that read codons beginning with adenine. Catalyzes the conversion of L-threonine, HCO(3)(-)/CO(2) and ATP to give threonylcarbamoyl-AMP (TC-AMP) as the acyladenylate intermediate, with the release of diphosphate. The protein is Threonylcarbamoyl-AMP synthase of Pseudoalteromonas atlantica (strain T6c / ATCC BAA-1087).